Here is a 760-residue protein sequence, read N- to C-terminus: Probable ubiquitin carboxyl-terminal hydrolase creB (760 aa).

Positions 1–28 are disordered; that stretch reads MGSFLRSFRNNAGSTTPSVGAVPAKKEV. A compositionally biased stretch (polar residues) spans 8–18; that stretch reads FRNNAGSTTPS. Residues 55–469 form the USP domain; that stretch reads YGMENYGNTC…CAYVLFYQET (415 aa). The active-site Nucleophile is the Cys-64. Disordered stretches follow at residues 114-146 and 242-270; these read AEAQAEKQRAANAQRPGMPPAQPQKPEDKDSPD and PAAIEKSLPAPDHAETVDQSASSGSKTPN. Residues 258–270 show a composition bias toward polar residues; sequence VDQSASSGSKTPN. His-420 functions as the Proton acceptor in the catalytic mechanism. Residues 520–760 are disordered; that stretch reads EEHNRPNGLK…LRKKSFSILS (241 aa). The stretch at 575 to 635 forms a coiled coil; the sequence is KSDVQGKKER…AALEASKASK (61 aa). 3 stretches are compositionally biased toward basic and acidic residues: residues 578-626, 635-651, and 708-742; these read VQGK…ELKA, KAQEDRRQSPDHGKDKL, and DPKDDPFQDSHHPNKPMMKEDEQANHKDPKHERTG. Positions 743 to 760 are enriched in basic residues; sequence HGKWRSFSLRKKSFSILS.

It belongs to the peptidase C19 family. In terms of assembly, interacts with creA, creC and qutD.

It carries out the reaction Thiol-dependent hydrolysis of ester, thioester, amide, peptide and isopeptide bonds formed by the C-terminal Gly of ubiquitin (a 76-residue protein attached to proteins as an intracellular targeting signal).. Functionally, ubiquitin thioesterase component of the regulatory network controlling carbon source utilization through ubiquitination and deubiquitination involving creA, creB, creC, creD and acrB. Deubiquitinates the creA catabolic repressor and the quinate permease qutD. Also plays a role in response to carbon starvation and the control of extracellular proteases activity. This is Probable ubiquitin carboxyl-terminal hydrolase creB (creB) from Aspergillus clavatus (strain ATCC 1007 / CBS 513.65 / DSM 816 / NCTC 3887 / NRRL 1 / QM 1276 / 107).